A 499-amino-acid polypeptide reads, in one-letter code: Lysine--tRNA ligase (499 aa).

Glu-408 and Glu-415 together coordinate Mg(2+).

It belongs to the class-II aminoacyl-tRNA synthetase family. In terms of assembly, homodimer. Requires Mg(2+) as cofactor.

The protein resides in the cytoplasm. It catalyses the reaction tRNA(Lys) + L-lysine + ATP = L-lysyl-tRNA(Lys) + AMP + diphosphate. The sequence is that of Lysine--tRNA ligase from Bacillus cereus (strain G9842).